The sequence spans 490 residues: MSQSVSERTRIKSDRYESGVIPYAKMGYWDAAYTVKDTDVLALFRITPQPGVDPVEAAAAVAGESSTATWTVVWTDLLTACERYRAKAYRVDPVPNSPDVYLAFNAYECDLFEEASLSNLTASIIGNVFGFKAVAALRLEDMRIPHSYLKTFQGPATGIVVERERLNKYGTPLLGATVKPKLGLSGKNYGRVVYEGLKGGLDFLKDDENINSQPFMRWRERFLNCLEGINRAAAATGEVKGSYLNITAATMEEVYKRAEYAKAIGSVLVMIDLVMGYTAIQSIAYWARENDMLLHLHRAGNSTYARQKNHGINFRVFCKWMRMSGVDHIHAGTVVGKLEGDPLMIKGFYDILRLTELEVNLPFGVFFEMDWASLRRCMPVASGGIHCGQMHQLIHYLGDDVVLQFGGGTIGHPDGIQAGATANRVALEAMVFSRNEGADFFNNQVGPQILRDAAKTCGPLQTALDLWKDISFNYTSTDTADFAETATANR.

Positions 127 and 177 each coordinate substrate. Lys-179 (proton acceptor) is an active-site residue. Lys-181 is a substrate binding site. Positions 205, 207, and 208 each coordinate Mg(2+). Residue Lys-205 is modified to N6-carboxylysine. His-297 (proton acceptor) is an active-site residue. Positions 298, 330, and 382 each coordinate substrate.

Belongs to the RuBisCO large chain family. Type I subfamily. In terms of assembly, heterohexadecamer of 8 large chains and 8 small chains. The cofactor is Mg(2+).

The protein localises to the plastid. It is found in the chloroplast. The enzyme catalyses 2 (2R)-3-phosphoglycerate + 2 H(+) = D-ribulose 1,5-bisphosphate + CO2 + H2O. The catalysed reaction is D-ribulose 1,5-bisphosphate + O2 = 2-phosphoglycolate + (2R)-3-phosphoglycerate + 2 H(+). In terms of biological role, ruBisCO catalyzes two reactions: the carboxylation of D-ribulose 1,5-bisphosphate, the primary event in carbon dioxide fixation, as well as the oxidative fragmentation of the pentose substrate in the photorespiration process. Both reactions occur simultaneously and in competition at the same active site. The polypeptide is Ribulose bisphosphate carboxylase large chain (Thalassiosira nordenskioeldii (Marine diatom)).